A 153-amino-acid chain; its full sequence is Transcriptional repressor NrdR 2 (153 aa).

Residues 3-34 (CPFCGQDDTQVKDSRPTDDNAAIRRRRACPGC) fold into a zinc finger. In terms of domain architecture, ATP-cone spans 49-139 (LVVVKKDGSR…VYRNFREAKD (91 aa)).

Belongs to the NrdR family. The cofactor is Zn(2+).

Negatively regulates transcription of bacterial ribonucleotide reductase nrd genes and operons by binding to NrdR-boxes. In Paramagnetospirillum magneticum (strain ATCC 700264 / AMB-1) (Magnetospirillum magneticum), this protein is Transcriptional repressor NrdR 2.